A 109-amino-acid chain; its full sequence is Fluoride-specific ion channel FluC 1 (109 aa).

The next 4 membrane-spanning stretches (helical) occupy residues 1–21, 29–49, 55–75, and 87–107; these read MVIVYLAIACGLGALVRYFFS, LPLGTLIANLLGCFLIGVFYN, EVYAILATGFCGGLTTFSTLN, and VFYSYLTLTYIGGLVAIFLGI. 2 residues coordinate Na(+): Gly66 and Thr69.

This sequence belongs to the fluoride channel Fluc/FEX (TC 1.A.43) family.

Its subcellular location is the cell membrane. The catalysed reaction is fluoride(in) = fluoride(out). With respect to regulation, na(+) is not transported, but it plays an essential structural role and its presence is essential for fluoride channel function. Its function is as follows. Fluoride-specific ion channel. Important for reducing fluoride concentration in the cell, thus reducing its toxicity. In Streptococcus pneumoniae serotype 4 (strain ATCC BAA-334 / TIGR4), this protein is Fluoride-specific ion channel FluC 1.